The sequence spans 248 residues: Calpain small subunit 2 (248 aa).

Positions 89, 92, 94, 117, 132, 134, 136, 138, 143, 162, 164, 166, and 205 each coordinate Ca(2+). EF-hand domains follow at residues 119–152 (FSLD…NNIK), 149–184 (NNIK…AGFQ), 185–213 (LNEQ…ISCL), and 214–248 (VRLD…TMYS).

In terms of assembly, heterodimer of a large (catalytic) and a small (regulatory) subunit.

Its subcellular location is the cytoplasm. The protein resides in the cell membrane. Its function is as follows. Calcium-regulated non-lysosomal thiol-protease which catalyzes limited proteolysis of substrates involved in cytoskeletal remodeling and signal transduction. This small subunit may act as a tissue-specific chaperone of the large subunit, possibly by helping it fold into its correct conformation for activity. The chain is Calpain small subunit 2 (CAPNS2) from Homo sapiens (Human).